Consider the following 82-residue polypeptide: Cytochrome b559 subunit alpha (82 aa).

Residues 21 to 35 (VIHSITIPALFIAGW) form a helical membrane-spanning segment. His-23 is a heme binding site.

The protein belongs to the PsbE/PsbF family. Heterodimer of an alpha subunit and a beta subunit. PSII is composed of 1 copy each of membrane proteins PsbA, PsbB, PsbC, PsbD, PsbE, PsbF, PsbH, PsbI, PsbJ, PsbK, PsbL, PsbM, PsbT, PsbX, PsbY, PsbZ, Psb30/Ycf12, peripheral proteins PsbO, CyanoQ (PsbQ), PsbU, PsbV and a large number of cofactors. It forms dimeric complexes. The cofactor is heme b.

The protein resides in the cellular thylakoid membrane. Its function is as follows. This b-type cytochrome is tightly associated with the reaction center of photosystem II (PSII). PSII is a light-driven water:plastoquinone oxidoreductase that uses light energy to abstract electrons from H(2)O, generating O(2) and a proton gradient subsequently used for ATP formation. It consists of a core antenna complex that captures photons, and an electron transfer chain that converts photonic excitation into a charge separation. In Nostoc punctiforme (strain ATCC 29133 / PCC 73102), this protein is Cytochrome b559 subunit alpha.